Reading from the N-terminus, the 425-residue chain is Serine/threonine transporter SstT (425 aa).

9 consecutive transmembrane segments (helical) span residues 11–31, 43–63, 91–111, 141–161, 182–202, 216–236, 290–310, 316–336, and 363–383; these read FLNG…LILA, FLGS…VFVL, LFAA…LVLV, ALVS…GFAL, IVHL…AGTI, LLAV…PIIV, IPLG…VLTL, LGIE…AVSA, and VAMQ…SAET.

This sequence belongs to the dicarboxylate/amino acid:cation symporter (DAACS) (TC 2.A.23) family.

It localises to the cell inner membrane. It catalyses the reaction L-serine(in) + Na(+)(in) = L-serine(out) + Na(+)(out). The catalysed reaction is L-threonine(in) + Na(+)(in) = L-threonine(out) + Na(+)(out). In terms of biological role, involved in the import of serine and threonine into the cell, with the concomitant import of sodium (symport system). The polypeptide is Serine/threonine transporter SstT (Psychromonas ingrahamii (strain DSM 17664 / CCUG 51855 / 37)).